The chain runs to 351 residues: Dihydroorotate dehydrogenase (quinone) (351 aa).

Residues 61–65 and threonine 85 each bind FMN; that span reads AGLDK. Lysine 65 is a binding site for substrate. 110–114 contributes to the substrate binding site; sequence NRMGF. FMN is bound by residues asparagine 139 and asparagine 172. Asparagine 172 lines the substrate pocket. Residue serine 175 is the Nucleophile of the active site. Asparagine 177 provides a ligand contact to substrate. FMN-binding residues include lysine 217 and threonine 245. 246 to 247 lines the substrate pocket; that stretch reads NT. FMN contacts are provided by residues glycine 268, glycine 297, and 318 to 319; that span reads YS.

This sequence belongs to the dihydroorotate dehydrogenase family. Type 2 subfamily. As to quaternary structure, monomer. FMN serves as cofactor.

Its subcellular location is the cell membrane. It carries out the reaction (S)-dihydroorotate + a quinone = orotate + a quinol. Its pathway is pyrimidine metabolism; UMP biosynthesis via de novo pathway; orotate from (S)-dihydroorotate (quinone route): step 1/1. Catalyzes the conversion of dihydroorotate to orotate with quinone as electron acceptor. This chain is Dihydroorotate dehydrogenase (quinone), found in Xanthomonas axonopodis pv. citri (strain 306).